The sequence spans 24 residues: Waglerin-4 (24 aa).

Cys11 and Cys15 are joined by a disulfide.

The protein belongs to the waglerin family. Monomer. Expressed by the venom gland.

It is found in the secreted. Waglerin-2 selectively blocks the epsilon subunit of muscle nicotinic acetylcholine receptor (nAChR). Also has effects on rodent ionotropic GABA(A) receptors (GABR), since it potentiates I(GABA) in some neurons and depresses I(GABA) in others. In mice, it elicits tachypnea, ocular proptosis, rapid collapse and spasms, whereas no toxic effects on respiration and blood pressure are observed in rats. In terms of biological role, waglerin-4 selectively blocks the epsilon subunit of muscle nicotinic acetylcholine receptor. It elicits tachypnea, ocular proptosis, rapid collapse and spasms in mice. It causes death by respiratory failure. This chain is Waglerin-4, found in Tropidolaemus wagleri (Wagler's pit viper).